The primary structure comprises 573 residues: Sulfite reductase [NADPH] hemoprotein beta-component (573 aa).

Cysteine 438, cysteine 444, cysteine 483, and cysteine 487 together coordinate [4Fe-4S] cluster. Cysteine 487 contributes to the siroheme binding site.

The protein belongs to the nitrite and sulfite reductase 4Fe-4S domain family. Alpha(8)-beta(8). The alpha component is a flavoprotein, the beta component is a hemoprotein. Siroheme serves as cofactor. [4Fe-4S] cluster is required as a cofactor.

It catalyses the reaction hydrogen sulfide + 3 NADP(+) + 3 H2O = sulfite + 3 NADPH + 4 H(+). The protein operates within sulfur metabolism; hydrogen sulfide biosynthesis; hydrogen sulfide from sulfite (NADPH route): step 1/1. In terms of biological role, component of the sulfite reductase complex that catalyzes the 6-electron reduction of sulfite to sulfide. This is one of several activities required for the biosynthesis of L-cysteine from sulfate. The polypeptide is Sulfite reductase [NADPH] hemoprotein beta-component (Nitrosomonas europaea (strain ATCC 19718 / CIP 103999 / KCTC 2705 / NBRC 14298)).